The chain runs to 158 residues: MAEVVEVLVPGGKATAGPPLGPALGPLGINVKAVVDEINKKTASFNGMQVPVRVEVDEKKNFTISVGIPPTTALIMKEAGVEKGSGEPNTKIVGDVPLEAAVTIAKMKLDDMLSYDLKNAVKEVVGTCVSLGITVSGKKPKDMLKEIDSGAHDAVLVG.

It belongs to the universal ribosomal protein uL11 family. In terms of assembly, part of the ribosomal stalk of the 50S ribosomal subunit. Interacts with L10 and the large rRNA to form the base of the stalk. L10 forms an elongated spine to which L12 dimers bind in a sequential fashion forming a multimeric L10(L12)X complex.

Its function is as follows. Forms part of the ribosomal stalk which helps the ribosome interact with GTP-bound translation factors. This is Large ribosomal subunit protein uL11 from Methanospirillum hungatei JF-1 (strain ATCC 27890 / DSM 864 / NBRC 100397 / JF-1).